A 116-amino-acid chain; its full sequence is Thioredoxin H-type (116 aa).

In terms of domain architecture, Thioredoxin spans 2–115; the sequence is AEEAQVIACH…HKIAVHAPIT (114 aa). Catalysis depends on nucleophile residues cysteine 39 and cysteine 42. Residues cysteine 39 and cysteine 42 are joined by a disulfide bond.

This sequence belongs to the thioredoxin family. Plant H-type subfamily.

It is found in the cytoplasm. Functionally, participates in various redox reactions through the reversible oxidation of the active center dithiol to a disulfide. The H form is known to activate a number of cytosolic enzymes. The protein is Thioredoxin H-type of Fagopyrum esculentum (Common buckwheat).